Here is a 163-residue protein sequence, read N- to C-terminus: SsrA-binding protein (163 aa).

This sequence belongs to the SmpB family.

The protein localises to the cytoplasm. In terms of biological role, required for rescue of stalled ribosomes mediated by trans-translation. Binds to transfer-messenger RNA (tmRNA), required for stable association of tmRNA with ribosomes. tmRNA and SmpB together mimic tRNA shape, replacing the anticodon stem-loop with SmpB. tmRNA is encoded by the ssrA gene; the 2 termini fold to resemble tRNA(Ala) and it encodes a 'tag peptide', a short internal open reading frame. During trans-translation Ala-aminoacylated tmRNA acts like a tRNA, entering the A-site of stalled ribosomes, displacing the stalled mRNA. The ribosome then switches to translate the ORF on the tmRNA; the nascent peptide is terminated with the 'tag peptide' encoded by the tmRNA and targeted for degradation. The ribosome is freed to recommence translation, which seems to be the essential function of trans-translation. The chain is SsrA-binding protein from Shewanella baltica (strain OS223).